The following is a 458-amino-acid chain: Fasciclin-like arabinogalactan protein 17 (458 aa).

Positions 1–30 (MDRRIYGGSAVIHLFLFFSVLIFSAASALS) are cleaved as a signal peptide. Residues 43 to 184 (NSNSVLVALL…GLIHGIERLL (142 aa)) form the FAS1 1 domain. Residue asparagine 80 is glycosylated (N-linked (GlcNAc...) asparagine). The disordered stretch occupies residues 207-262 (PEGAPEVDPRTNRLKKPAAPVPAGSPPALPIQSAMAPGPSLAPAPAPGPGGKQHHF). Pro residues predominate over residues 225–235 (APVPAGSPPAL). The 144-residue stretch at 268–411 (VKDFIHTLLH…ISVQGIDGVL (144 aa)) folds into the FAS1 2 domain. The N-linked (GlcNAc...) asparagine glycan is linked to asparagine 290.

The protein belongs to the fasciclin-like AGP family.

The protein resides in the secreted. Functionally, may be a cell surface adhesion protein. This Arabidopsis thaliana (Mouse-ear cress) protein is Fasciclin-like arabinogalactan protein 17 (FLA17).